We begin with the raw amino-acid sequence, 106 residues long: Isocitrate dehydrogenase [NAD] subunit gamma, mitochondrial (106 aa).

This sequence belongs to the isocitrate and isopropylmalate dehydrogenases family. As to quaternary structure, heterooligomer of subunits alpha (IDH3A), beta (IDH3B), and gamma (IDH3G) in the apparent ratio of 2:1:1. The heterodimer containing one IDH3A and one IDH3B subunit and the heterodimer containing one IDH3A and one IDH3G subunit assemble into a heterotetramer (which contains two subunits of IDH3A, one of IDH3B and one of IDH3G) and further into the heterooctamer.

The protein resides in the mitochondrion. The heterotetramer and the heterodimer composed of IDH3A and IDH3G subunits can be allosterically activated by citrate (CIT) or/and ADP, and the two activators can act independently or synergistically. The heterodimer composed of IDH3A and IDH3B subunits cannot be allosterically regulated and the allosteric regulation of the heterotetramer is through the IDH3G subunit and not the IDH3B subunit. The IDH3G subunit contains the allosteric site which consists of a CIT-binding site and an ADP-binding site, and the binding of CIT and ADP causes conformational changes at the allosteric site which are transmitted to the active site in the catalytic subunit (IDH3A) through a cascade of conformational changes at the heterodimer interface, leading to stabilization of the isocitrate-binding at the active site and thus activation of the enzyme. ATP can activate the heterotetramer and the heterodimer composed of IDH3A and IDH3G subunits at low concentrations but inhibits their activities at high concentrations, whereas ATP exhibits only inhibitory effect on the heterodimer composed of IDH3A and IDH3B subunits. Its function is as follows. Regulatory subunit which plays a role in the allosteric regulation of the enzyme catalyzing the decarboxylation of isocitrate (ICT) into alpha-ketoglutarate. The heterodimer composed of the alpha (IDH3A) and beta (IDH3B) subunits and the heterodimer composed of the alpha (IDH3A) and gamma (IDH3G) subunits, have considerable basal activity but the full activity of the heterotetramer (containing two subunits of IDH3A, one of IDH3B and one of IDH3G) requires the assembly and cooperative function of both heterodimers. The polypeptide is Isocitrate dehydrogenase [NAD] subunit gamma, mitochondrial (IDH3G) (Sus scrofa (Pig)).